A 490-amino-acid polypeptide reads, in one-letter code: Cysteine desulfurase, mitochondrial (490 aa).

Pyridoxal 5'-phosphate is bound by residues 161–162, asparagine 241, glutamine 269, and 289–291; these read AT and SSH. Position 292 is an N6-(pyridoxal phosphate)lysine (lysine 292). Threonine 329 lines the pyridoxal 5'-phosphate pocket. Cysteine 414 acts as the Cysteine persulfide intermediate in catalysis. Residue cysteine 414 coordinates [2Fe-2S] cluster.

It belongs to the class-V pyridoxal-phosphate-dependent aminotransferase family. NifS/IscS subfamily. Requires pyridoxal 5'-phosphate as cofactor.

The protein localises to the mitochondrion. The enzyme catalyses (sulfur carrier)-H + L-cysteine = (sulfur carrier)-SH + L-alanine. Its function is as follows. Catalyzes the removal of elemental sulfur from cysteine to produce alanine. It supplies the inorganic sulfur for iron-sulfur (Fe-S) clusters. Plays a role in both tRNA-processing and mitochondrial metabolism. Involved in the 2-thio-modification of both 5-carboxymethylaminomethyl-2-thiouridine in mitochondrial tRNAs and 5-methoxycarbonylmethyl-2-thiouridine (mcm5s2U) in cytoplasmic tRNAs. This is Cysteine desulfurase, mitochondrial from Eremothecium gossypii (strain ATCC 10895 / CBS 109.51 / FGSC 9923 / NRRL Y-1056) (Yeast).